The sequence spans 60 residues: MTPAGPAQLLIVALVVIVLFGSNKLPDVARSVGRSMRIFKSEIKEMNKDQIESSDQTLKN.

The chain crosses the membrane as a helical span at residues 1–21; the sequence is MTPAGPAQLLIVALVVIVLFG.

It belongs to the TatA/E family. In terms of assembly, the Tat system comprises two distinct complexes: a TatABC complex, containing multiple copies of TatA, TatB and TatC subunits, and a separate TatA complex, containing only TatA subunits. Substrates initially bind to the TatABC complex, which probably triggers association of the separate TatA complex to form the active translocon.

The protein resides in the cell membrane. In terms of biological role, part of the twin-arginine translocation (Tat) system that transports large folded proteins containing a characteristic twin-arginine motif in their signal peptide across membranes. TatA could form the protein-conducting channel of the Tat system. This Corynebacterium glutamicum (strain R) protein is Sec-independent protein translocase protein TatA.